The chain runs to 188 residues: Peptide deformylase (188 aa).

C109 and H152 together coordinate Fe cation. E153 is an active-site residue. H156 is a binding site for Fe cation.

It belongs to the polypeptide deformylase family. Fe(2+) serves as cofactor.

It carries out the reaction N-terminal N-formyl-L-methionyl-[peptide] + H2O = N-terminal L-methionyl-[peptide] + formate. Functionally, removes the formyl group from the N-terminal Met of newly synthesized proteins. Requires at least a dipeptide for an efficient rate of reaction. N-terminal L-methionine is a prerequisite for activity but the enzyme has broad specificity at other positions. This is Peptide deformylase from Chloroflexus aggregans (strain MD-66 / DSM 9485).